The following is a 197-amino-acid chain: uncharacterized protein (197 aa).

The SIS domain occupies 33–184; sequence MISKIMDASS…IAEFMSILGK (152 aa).

It belongs to the SIS family. PHI subfamily.

This is an uncharacterized protein from Methanothermobacter thermautotrophicus (strain ATCC 29096 / DSM 1053 / JCM 10044 / NBRC 100330 / Delta H) (Methanobacterium thermoautotrophicum).